Consider the following 178-residue polypeptide: Fatty-acid and retinol-binding protein 1 (178 aa).

Positions 1–16 are cleaved as a signal peptide; it reads MYHQLILMALIGVIMA. Asparagine 44 and asparagine 75 each carry an N-linked (GlcNAc...) asparagine glycan. 2 coiled-coil regions span residues 67–89 and 122–154; these read DAAL…ELRN and QKLD…LKAT. Residue asparagine 157 is glycosylated (N-linked (GlcNAc...) asparagine).

Belongs to the fatty-acid and retinol-binding protein (FARBP) family. Post-translationally, N-glycosylated.

It is found in the secreted. Its function is as follows. Binds retinol and different fatty acids. The sequence is that of Fatty-acid and retinol-binding protein 1 from Onchocerca dukei (Filarial nematode worm).